We begin with the raw amino-acid sequence, 131 residues long: UPF0146 protein PYRAB01940 (131 aa).

It belongs to the UPF0146 family.

The protein is UPF0146 protein PYRAB01940 of Pyrococcus abyssi (strain GE5 / Orsay).